The sequence spans 466 residues: Pentatricopeptide repeat-containing protein At4g01400, mitochondrial (466 aa).

The N-terminal 34 residues, 1 to 34 (MIRRPIYDFAAVFRHLTSPLSTSSRFLFYSSSEH), are a transit peptide targeting the mitochondrion. 8 PPR repeats span residues 118–152 (TGEI…NFTP), 153–188 (QPKH…GVMP), 189–223 (NTRS…DVVP), 224–258 (DVDS…GFVP), 259–293 (DRLS…GCNP), 294–328 (DLVH…GCSP), 329–363 (NSVS…GFSP), and 364–398 (HFSV…GETL).

The protein belongs to the PPR family. P subfamily.

The protein localises to the mitochondrion. The polypeptide is Pentatricopeptide repeat-containing protein At4g01400, mitochondrial (Arabidopsis thaliana (Mouse-ear cress)).